Consider the following 185-residue polypeptide: Large ribosomal subunit protein uL22 (185 aa).

This sequence belongs to the universal ribosomal protein uL22 family. Part of the 50S ribosomal subunit.

Functionally, this protein binds specifically to 23S rRNA. It makes multiple contacts with different domains of the 23S rRNA in the assembled 50S subunit and ribosome. The globular domain of the protein is located near the polypeptide exit tunnel on the outside of the subunit, while an extended beta-hairpin is found that lines the wall of the exit tunnel in the center of the 70S ribosome. The chain is Large ribosomal subunit protein uL22 from Pyrobaculum aerophilum (strain ATCC 51768 / DSM 7523 / JCM 9630 / CIP 104966 / NBRC 100827 / IM2).